The primary structure comprises 724 residues: Eukaryotic elongation factor 2 kinase (724 aa).

An N-acetylalanine modification is found at A2. Residues 11–35 (EGVDGGGSSGAGRHGDSDTDSDDDE) are disordered. Residues 13 to 22 (VDGGGSSGAG) show a composition bias toward gly residues. Phosphoserine is present on residues S18, S27, S70, and S73. A Phosphoserine; by autocatalysis and TRPM7 modification is found at S77. A calmodulin-binding region spans residues 80–93 (FKEAWKHAIEKAKH). In terms of domain architecture, Alpha-type protein kinase spans 115–325 (RYNAVTGEWL…ICQSMGLAPF (211 aa)). Position 242 is a phosphoserine (S242). Residue 295–301 (GDGNLGV) coordinates ATP. Position 347 is a phosphothreonine (T347). Position 352 is a phosphothreonine; by autocatalysis (T352). Residues 353-476 (EEKCGSPRIR…PESDEDSLGS (124 aa)) are disordered. S358 carries the post-translational modification Phosphoserine; by MAPK13 and CDK1. A compositionally biased stretch (low complexity) spans 364 to 376 (LSGSRPPLLLRLS). 2 positions are modified to phosphoserine: S365 and S391. Residues 385 to 403 (SDVTFDSLPSSPSSATPHS) are compositionally biased toward polar residues. S397 carries the phosphoserine; by AMPK modification. Basic and acidic residues-rich tracts occupy residues 421 to 435 (GPRD…RDSE) and 444 to 468 (SEKR…RRPE). S434, S444, S469, S473, and S476 each carry phosphoserine. Position 499 is a phosphoserine; by PKA (S499).

Belongs to the protein kinase superfamily. Alpha-type protein kinase family. As to quaternary structure, monomer or homodimer. Interacts with Calmodulin/CALM1; this interaction is strictly required for phosphorylation activity. The N-terminus is blocked. In terms of processing, autophosphorylated at multiple residues, Thr-347 being the major site. Phosphorylated by AMP-activated protein kinase AMPK at Ser-397 leading to EEF2K activation and protein synthesis inhibition. Phosphorylated by TRPM7 at Ser-77 resulting in improved protein stability, higher EE2F phosphorylated and subsequently reduced rate of protein synthesis. Phosphorylation by other kinases such as CDK1 and MAPK13 at Ser-358 or RPS6KA1 and RPS6KB1 at Ser-365 instead decrease EEF2K activity and promote protein synthesis. In terms of tissue distribution, widely expressed, with high levels in reticulocytes and skeletal muscle.

The enzyme catalyses [translation elongation factor 2] + ATP = [translation elongation factor 2]-phosphate + ADP + H(+). With respect to regulation, undergoes calcium/calmodulin-dependent intramolecular autophosphorylation, and this results in it becoming partially calcium/calmodulin-independent. Its function is as follows. Threonine kinase that regulates protein synthesis by controlling the rate of peptide chain elongation. Upon activation by a variety of upstream kinases including AMPK or TRPM7, phosphorylates the elongation factor EEF2 at a single site, renders it unable to bind ribosomes and thus inactive. In turn, the rate of protein synthesis is reduced. The protein is Eukaryotic elongation factor 2 kinase of Rattus norvegicus (Rat).